Consider the following 205-residue polypeptide: Adenylyl-sulfate kinase (205 aa).

ATP is bound at residue 31–38; sequence GLSGAGKS. The active-site Phosphoserine intermediate is the S105.

The protein belongs to the APS kinase family.

It carries out the reaction adenosine 5'-phosphosulfate + ATP = 3'-phosphoadenylyl sulfate + ADP + H(+). It participates in sulfur metabolism; hydrogen sulfide biosynthesis; sulfite from sulfate: step 2/3. Its function is as follows. Catalyzes the synthesis of activated sulfate. In Shewanella putrefaciens (strain CN-32 / ATCC BAA-453), this protein is Adenylyl-sulfate kinase.